Here is a 627-residue protein sequence, read N- to C-terminus: 1-deoxy-D-xylulose-5-phosphate synthase (627 aa).

Thiamine diphosphate contacts are provided by residues H80 and 121-123 (GHS). D152 contributes to the Mg(2+) binding site. Thiamine diphosphate-binding positions include 153–154 (GA), N181, Y288, and E370. N181 serves as a coordination point for Mg(2+).

Belongs to the transketolase family. DXPS subfamily. Homodimer. Mg(2+) serves as cofactor. It depends on thiamine diphosphate as a cofactor.

The enzyme catalyses D-glyceraldehyde 3-phosphate + pyruvate + H(+) = 1-deoxy-D-xylulose 5-phosphate + CO2. It participates in metabolic intermediate biosynthesis; 1-deoxy-D-xylulose 5-phosphate biosynthesis; 1-deoxy-D-xylulose 5-phosphate from D-glyceraldehyde 3-phosphate and pyruvate: step 1/1. Its function is as follows. Catalyzes the acyloin condensation reaction between C atoms 2 and 3 of pyruvate and glyceraldehyde 3-phosphate to yield 1-deoxy-D-xylulose-5-phosphate (DXP). The protein is 1-deoxy-D-xylulose-5-phosphate synthase of Vibrio atlanticus (strain LGP32) (Vibrio splendidus (strain Mel32)).